The sequence spans 409 residues: Translation initiation factor 2 subunit gamma (409 aa).

Positions 7–203 (QPEVNIGLVG…AIEREIPTPE (197 aa)) constitute a tr-type G domain. The G1 stretch occupies residues 16 to 23 (GHVDHGKT). Mg(2+) is bound by residues D19, T23, G44, and S46. Residue 19–24 (DHGKTT) participates in GTP binding. Positions 44-48 (GISIR) are G2. Positions 90-93 (DAPG) are G3. GTP contacts are provided by residues 146 to 149 (NKID) and 181 to 183 (SAQ). The tract at residues 146–149 (NKID) is G4. A G5 region spans residues 181–183 (SAQ).

Belongs to the TRAFAC class translation factor GTPase superfamily. Classic translation factor GTPase family. EIF2G subfamily. Heterotrimer composed of an alpha, a beta and a gamma chain. Requires Mg(2+) as cofactor.

It catalyses the reaction GTP + H2O = GDP + phosphate + H(+). EIF-2 functions in the early steps of protein synthesis by forming a ternary complex with GTP and initiator tRNA. This chain is Translation initiation factor 2 subunit gamma, found in Haloquadratum walsbyi (strain DSM 16790 / HBSQ001).